We begin with the raw amino-acid sequence, 128 residues long: Small ribosomal subunit protein uS9 (128 aa).

This sequence belongs to the universal ribosomal protein uS9 family.

The chain is Small ribosomal subunit protein uS9 from Flavobacterium psychrophilum (strain ATCC 49511 / DSM 21280 / CIP 103535 / JIP02/86).